We begin with the raw amino-acid sequence, 298 residues long: Octopine catabolism/uptake operon regulatory protein OccR (298 aa).

The 58-residue stretch at 1–58 (MNLRQVEAFRAVMLTGQMTAAAELMLVTQPAISRLIKDFEQATKLQLFERRGNHIIPT) folds into the HTH lysR-type domain. The segment at residues 18 to 37 (MTAAAELMLVTQPAISRLIK) is a DNA-binding region (H-T-H motif).

The protein belongs to the LysR transcriptional regulatory family.

Its function is as follows. Positive regulatory protein for the occ operon involved in octopine catabolism and uptake. Also acts as a negative regulator of its expression. This is Octopine catabolism/uptake operon regulatory protein OccR (occR) from Agrobacterium tumefaciens (strain Ach5).